The primary structure comprises 128 residues: Calcitonin gene-related peptide 1 (128 aa).

The signal sequence occupies residues 1-25 (MGFLKFSPFLVVSILLLYQACGLQA). Positions 26 to 80 (VPLRSTLESSPGMAATLSEEEARLLLAALVQNYMQMKVRELEQEQEAEGSSVTAQ) are excised as a propeptide. A disulfide bridge connects residues cysteine 84 and cysteine 89. Phenylalanine 119 bears the Phenylalanine amide mark. A propeptide spanning residues 125–128 (DLQA) is cleaved from the precursor.

This sequence belongs to the calcitonin family.

It localises to the secreted. Its function is as follows. CGRP1/CALCA is a peptide hormone that induces vasodilation mediated by the CALCRL-RAMP1 receptor complex. Dilates a variety of vessels including the coronary, cerebral and systemic vasculature. Its abundance in the CNS also points toward a neurotransmitter or neuromodulator role. It also elevates platelet cAMP. CGRP1 can also bind and activate CALCR-RAMP1 (AMYR1) receptor complex. The sequence is that of Calcitonin gene-related peptide 1 from Rattus norvegicus (Rat).